A 327-amino-acid polypeptide reads, in one-letter code: Zinc transport protein ZntB (327 aa).

Residues 1-271 (MDVVEGKALQ…AMNRRTYTMS (271 aa)) lie on the Cytoplasmic side of the membrane. The helical transmembrane segment at 272–292 (LLAMVFLPTTFLTGLFGVNLG) threads the bilayer. Residues 293-300 (GIPGNTDA) are Periplasmic-facing. The helical transmembrane segment at 301 to 321 (FGFTIFCMMLVVLVLSVAWWL) threads the bilayer. Over 322-327 (KRSKWL) the chain is Cytoplasmic.

This sequence belongs to the CorA metal ion transporter (MIT) (TC 1.A.35) family.

It localises to the cell inner membrane. It catalyses the reaction Zn(2+)(out) + H(+)(out) = Zn(2+)(in) + H(+)(in). Zinc transporter. Acts as a Zn(2+):proton symporter, which likely mediates zinc ion uptake. The protein is Zinc transport protein ZntB of Yersinia pseudotuberculosis serotype O:1b (strain IP 31758).